Reading from the N-terminus, the 469-residue chain is D-3-phosphoglycerate dehydrogenase 2 (469 aa).

At S2 the chain carries N-acetylserine. 3 positions are modified to phosphoserine: S22, S29, and S33. Residues 208–209, D228, 285–287, and D311 each bind NAD(+); these read HI and ASR. R287 is an active-site residue. The active site involves E316. The active-site Proton donor is the H347. An NAD(+)-binding site is contributed by 347–350; that stretch reads HIGG. Residues 399-469 enclose the ACT domain; the sequence is RVLYIHRNVP…SAKVSIRLLY (71 aa).

It belongs to the D-isomer specific 2-hydroxyacid dehydrogenase family.

The catalysed reaction is (2R)-3-phosphoglycerate + NAD(+) = 3-phosphooxypyruvate + NADH + H(+). The enzyme catalyses (R)-2-hydroxyglutarate + NAD(+) = 2-oxoglutarate + NADH + H(+). It functions in the pathway amino-acid biosynthesis; L-serine biosynthesis; L-serine from 3-phospho-D-glycerate: step 1/3. In terms of biological role, catalyzes the reversible oxidation of 3-phospho-D-glycerate to 3-phosphonooxypyruvate, the first step of the phosphorylated L-serine biosynthesis pathway. Also catalyzes the reversible oxidation of 2-hydroxyglutarate to 2-oxoglutarate. The polypeptide is D-3-phosphoglycerate dehydrogenase 2 (SER33) (Saccharomyces cerevisiae (strain ATCC 204508 / S288c) (Baker's yeast)).